The following is a 479-amino-acid chain: Neuronal acetylcholine receptor subunit alpha-9 (479 aa).

An N-terminal signal peptide occupies residues 1–22; it reads MNWSHSCISFCWIYFAASRLRA. The Extracellular portion of the chain corresponds to 23–238; the sequence is AETADGKYAQ…FTLLLKRRSS (216 aa). A glycan (N-linked (GlcNAc...) asparagine) is linked at Asn57. A disulfide bond links Cys155 and Cys169. A glycan (N-linked (GlcNAc...) asparagine) is linked at Asn170. 2 residues coordinate Na(+): Ser191 and Asp193. Residues Cys219 and Cys220 are joined by a disulfide bond. 3 helical membrane passes run 239–259, 269–289, and 303–323; these read FYIV…PLSF, VSLG…VAEI, and YIAT…VMNI. Topologically, residues 324-457 are cytoplasmic; sequence HFCGAEARPV…WKKVAKVIDR (134 aa). Residues 458–478 traverse the membrane as a helical segment; sequence FFMWIFFIMVFVMTILIIARA.

This sequence belongs to the ligand-gated ion channel (TC 1.A.9) family. Acetylcholine receptor (TC 1.A.9.1) subfamily. Alpha-9/CHRNA9 sub-subfamily. In terms of assembly, forms homo- or heteropentameric channels in conjunction with CHRNA10. The native outer hair cell receptor is composed of CHRNA9:CHRNA10 heterooligomers. Found in the stoichiometric form (CHRNA9)2:(CHRNA10)3. Post-translationally, N-glycosylated. Expressed in cochlea, keratinocytes, pituitary gland, B-cells and T-cells.

The protein resides in the synaptic cell membrane. It localises to the cell membrane. It catalyses the reaction Ca(2+)(in) = Ca(2+)(out). It carries out the reaction K(+)(in) = K(+)(out). The enzyme catalyses Na(+)(in) = Na(+)(out). The catalysed reaction is Mg(2+)(in) = Mg(2+)(out). Activated by a myriad of ligands such as acetylcholine. AChR activity is inhibited by the antagonist alpha-conotoxins RgIA and GeXXA, small disulfide-constrained peptides from cone snails. Functionally, component of neuronal acetylcholine receptors (nAChRs) that function as pentameric, ligand-gated cation channels with high calcium permeability among other activities. nAChRs are excitatory neurotrasnmitter receptors formed by a collection of nAChR subunits known to mediate synaptic transmission in the nervous system and the neuromuscular junction. Each nAchR subunit confers differential attributes to channel properties, including activation, deactivation and desensitization kinetics, pH sensitivity, cation permeability, and binding to allosteric modulators. Forms either homopentamers or heteropentamers with CHRNA10. Expressed in the inner ear, in sympathetic neurons and in other non-neuronal cells, such as skin keratinocytes and lymphocytes. nAChR formed by CHRNA9:CHRNA10 mediate central nervous system control of auditory and vestibular sensory processing. The channel is permeable to a range of divalent cations including calcium, the influx of which may activate a potassium current which hyperpolarizes the cell membrane. In the ear, mediates synaptic transmission between efferent olivocochlear fibers and hair cells of the cochlea, this may lead to a reduction in basilar membrane motion, altering the activity of auditory nerve fibers and reducing the range of dynamic hearing. This may protect against acoustic trauma. May also regulate keratinocyte adhesion. The sequence is that of Neuronal acetylcholine receptor subunit alpha-9 from Homo sapiens (Human).